Here is a 959-residue protein sequence, read N- to C-terminus: Translation initiation factor IF-2 (959 aa).

A disordered region spans residues 33-373 (SHASSVEEAD…PVTERKFHEL (341 aa)). The segment covering 46–60 (IASSFSAGVTKNVQA) has biased composition (polar residues). Residues 63–73 (AKDKQVAEQKA) are compositionally biased toward basic and acidic residues. A compositionally biased stretch (low complexity) spans 76–100 (AKATTPQPAASKAAEKPAAATQEAS). 3 stretches are compositionally biased toward basic and acidic residues: residues 112–125 (FKAE…EQVA), 134–143 (SNDRKSDYRQ), and 179–192 (NDGH…DKNR). Positions 193–211 (SFNANSRQQDIGRQGQTQA) are enriched in polar residues. Basic and acidic residues-rich tracts occupy residues 234 to 258 (ARQR…RQEA) and 266 to 276 (QTEDKKHREAP). Over residues 277–287 (AKATEPAEPVA) the composition is skewed to low complexity. Over residues 306–323 (NRPDKAHDRDHGLEDGQK) the composition is skewed to basic and acidic residues. Positions 328 to 346 (SWNSQNQVRNQKNSNWNNN) are enriched in low complexity. Positions 347–357 (KKNKKGKHHKN) are enriched in basic residues. The 170-residue stretch at 460 to 629 (ERAPVVTIMG…LLVAEVEELK (170 aa)) folds into the tr-type G domain. Residues 469-476 (GHVDHGKT) are G1. A GTP-binding site is contributed by 469-476 (GHVDHGKT). Residues 494–498 (GITQH) form a G2 region. A G3 region spans residues 515–518 (DTPG). GTP-binding positions include 515 to 519 (DTPGH) and 569 to 572 (NKID). The tract at residues 569-572 (NKID) is G4. Positions 605 to 607 (SAK) are G5.

It belongs to the TRAFAC class translation factor GTPase superfamily. Classic translation factor GTPase family. IF-2 subfamily.

It localises to the cytoplasm. In terms of biological role, one of the essential components for the initiation of protein synthesis. Protects formylmethionyl-tRNA from spontaneous hydrolysis and promotes its binding to the 30S ribosomal subunits. Also involved in the hydrolysis of GTP during the formation of the 70S ribosomal complex. In Streptococcus equi subsp. zooepidemicus (strain H70), this protein is Translation initiation factor IF-2.